The following is a 321-amino-acid chain: Protein translocase subunit SecF (321 aa).

6 helical membrane-spanning segments follow: residues V23–T43, L158–I178, L189–I209, L217–F237, F258–A280, and Y290–P312.

The protein belongs to the SecD/SecF family. SecF subfamily. Forms a complex with SecD. Part of the essential Sec protein translocation apparatus which comprises SecA, SecYEG and auxiliary proteins SecDF. Other proteins may also be involved.

The protein localises to the cell inner membrane. In terms of biological role, part of the Sec protein translocase complex. Interacts with the SecYEG preprotein conducting channel. SecDF uses the proton motive force (PMF) to complete protein translocation after the ATP-dependent function of SecA. Probably participates in protein translocation into and across both the cytoplasmic and thylakoid membranes in cyanobacterial cells. The protein is Protein translocase subunit SecF of Prochlorococcus marinus (strain SARG / CCMP1375 / SS120).